The sequence spans 173 residues: FMN reductase (NADH) RutF 2 (173 aa).

It belongs to the non-flavoprotein flavin reductase family. RutF subfamily.

It catalyses the reaction FMNH2 + NAD(+) = FMN + NADH + 2 H(+). Functionally, catalyzes the reduction of FMN to FMNH2 which is used to reduce pyrimidine by RutA via the Rut pathway. The sequence is that of FMN reductase (NADH) RutF 2 from Rhizobium rhizogenes (strain K84 / ATCC BAA-868) (Agrobacterium radiobacter).